The chain runs to 571 residues: Mannan endo-1,4-beta-mannosidase B (571 aa).

Residues 1 to 19 (MNSLSLLLFCIFFVFSTFA) form the signal peptide. The CBM6 domain maps to 22 to 141 (VYYEAENGKL…WMWVDAFVIN (120 aa)). Residues 165-459 (PAAKKLYDFL…FTHKTVMNMD (295 aa)) form the GH26 domain. Substrate is bound at residue W286. The Proton donor role is filled by E319. Residues W324 and Y379 each coordinate substrate. The Nucleophile role is filled by E407. CBM10 domains are found at residues 491–527 (ECFS…CGIG) and 534–571 (VCWS…CGII).

Belongs to the glycosyl hydrolase 26 family.

The catalysed reaction is Random hydrolysis of (1-&gt;4)-beta-D-mannosidic linkages in mannans, galactomannans and glucomannans.. This Piromyces sp protein is Mannan endo-1,4-beta-mannosidase B (MANB).